The primary structure comprises 68 residues: Large ribosomal subunit protein bL28 (68 aa).

Positions M1–E30 are disordered. The segment covering Q13–N22 has biased composition (polar residues).

It belongs to the bacterial ribosomal protein bL28 family.

This is Large ribosomal subunit protein bL28 from Solidesulfovibrio magneticus (strain ATCC 700980 / DSM 13731 / RS-1) (Desulfovibrio magneticus).